A 394-amino-acid polypeptide reads, in one-letter code: Seipin (394 aa).

Over 1-27 (MVNDPPVPALLWAQEMGHVMAGRARKL) the chain is Cytoplasmic. Residues 28-48 (LLQFGVFFCTILLLLWVSVFL) traverse the membrane as a helical segment. The Lumenal portion of the chain corresponds to 49–242 (YGSFYYSYMP…TCAFVGVASN (194 aa)). N-linked (GlcNAc...) asparagine glycosylation is found at Asn-88 and Asn-242. A helical transmembrane segment spans residues 243–263 (FTFLSVIVLFSYMQWVWGGIW). Residues 264–394 (PRQRLSLQVN…VRQRPICSSS (131 aa)) lie on the Cytoplasmic side of the membrane. The segment at 281–394 (RKDIQRKVSA…VRQRPICSSS (114 aa)) is disordered. At Ser-289 the chain carries Phosphoserine. A compositionally biased stretch (low complexity) spans 292–303 (QPGPQGQEESPQ). Ser-346 and Ser-351 each carry phosphoserine.

This sequence belongs to the seipin family. In terms of assembly, undecamer (an oligomer having eleven subunits). Oligomerization is important for its function in lipid droplet formation. Interacts with LDAF1 to form an oligomeric complex. Interacts with RAB18. Interacts with ZFYVE1 in a RAB18-dependent manner.

The protein localises to the endoplasmic reticulum membrane. The protein resides in the lipid droplet. In terms of biological role, plays a crucial role in the formation of lipid droplets (LDs) which are storage organelles at the center of lipid and energy homeostasis. In association with LDAF1, defines the sites of LD formation in the ER. Also required for growth and maturation of small nascent LDs into larger mature LDs. Mediates the formation and/or stabilization of endoplasmic reticulum-lipid droplets (ER-LD) contacts, facilitating protein and lipid delivery from the ER into growing LDs. Regulates the maturation of ZFYVE1-positive nascent LDs and the function of the RAB18-ZFYVE1 complex in mediating the formation of ER-LD contacts. Binds anionic phospholipids including phosphatidic acid. Plays an important role in the differentiation and development of adipocytes. This is Seipin from Bos taurus (Bovine).